The following is a 283-amino-acid chain: 4-hydroxy-3-methylbut-2-enyl diphosphate reductase (283 aa).

Cys12 contacts [4Fe-4S] cluster. (2E)-4-hydroxy-3-methylbut-2-enyl diphosphate is bound by residues His40 and His72. Positions 40 and 72 each coordinate dimethylallyl diphosphate. Residues His40 and His72 each contribute to the isopentenyl diphosphate site. Residue Cys94 coordinates [4Fe-4S] cluster. His122 serves as a coordination point for (2E)-4-hydroxy-3-methylbut-2-enyl diphosphate. His122 lines the dimethylallyl diphosphate pocket. Isopentenyl diphosphate is bound at residue His122. Glu124 acts as the Proton donor in catalysis. Thr160 contributes to the (2E)-4-hydroxy-3-methylbut-2-enyl diphosphate binding site. Cys188 serves as a coordination point for [4Fe-4S] cluster. Positions 216, 218, and 259 each coordinate (2E)-4-hydroxy-3-methylbut-2-enyl diphosphate. Positions 216, 218, and 259 each coordinate dimethylallyl diphosphate. Ser216, Asn218, and Ser259 together coordinate isopentenyl diphosphate.

The protein belongs to the IspH family. The cofactor is [4Fe-4S] cluster.

The enzyme catalyses isopentenyl diphosphate + 2 oxidized [2Fe-2S]-[ferredoxin] + H2O = (2E)-4-hydroxy-3-methylbut-2-enyl diphosphate + 2 reduced [2Fe-2S]-[ferredoxin] + 2 H(+). It carries out the reaction dimethylallyl diphosphate + 2 oxidized [2Fe-2S]-[ferredoxin] + H2O = (2E)-4-hydroxy-3-methylbut-2-enyl diphosphate + 2 reduced [2Fe-2S]-[ferredoxin] + 2 H(+). It functions in the pathway isoprenoid biosynthesis; dimethylallyl diphosphate biosynthesis; dimethylallyl diphosphate from (2E)-4-hydroxy-3-methylbutenyl diphosphate: step 1/1. The protein operates within isoprenoid biosynthesis; isopentenyl diphosphate biosynthesis via DXP pathway; isopentenyl diphosphate from 1-deoxy-D-xylulose 5-phosphate: step 6/6. Catalyzes the conversion of 1-hydroxy-2-methyl-2-(E)-butenyl 4-diphosphate (HMBPP) into a mixture of isopentenyl diphosphate (IPP) and dimethylallyl diphosphate (DMAPP). Acts in the terminal step of the DOXP/MEP pathway for isoprenoid precursor biosynthesis. The chain is 4-hydroxy-3-methylbut-2-enyl diphosphate reductase from Dictyoglomus thermophilum (strain ATCC 35947 / DSM 3960 / H-6-12).